Reading from the N-terminus, the 336-residue chain is Large ribosomal subunit protein mL39 (336 aa).

A TGS domain is found at 60 to 126 (EKIEVKHVGK…TKSCEIKFLT (67 aa)). Lysine 123 is subject to N6-acetyllysine.

The protein belongs to the mitochondrion-specific ribosomal protein mL39 family. Component of the mitochondrial ribosome large subunit (39S) which comprises a 16S rRNA and about 50 distinct proteins.

It localises to the mitochondrion. The polypeptide is Large ribosomal subunit protein mL39 (Mrpl39) (Mus musculus (Mouse)).